Here is a 525-residue protein sequence, read N- to C-terminus: G-protein regulator 1 (525 aa).

In terms of domain architecture, GoLoco spans 424-445; that stretch reads PVDMMDLIFSMSSRMDDQRTEL. Positions 488–525 are disordered; it reads HTMNRILKRSKKSKSSLDSTNSMQGDDTRSDDVTMTSK.

As to quaternary structure, interacts with gpr-1, lin-5 and GDP-bound goa-1.

Its subcellular location is the cytoplasm. The protein resides in the cell cortex. It localises to the cytoskeleton. It is found in the spindle. Functionally, in the 1-cell embryo, probably together with gpr-2, controls nuclear rotation and spindle elongation during mitosis. Complex of gpr-1 and gpr-2, in association with lin-5, activates G-protein signaling to affect mitotic spindle force. Polarity determinants (par genes) may regulate lin-5/gpr-1/gpr-2/goa-1 locally to create the asymmetric forces that drive spindle movement. The chain is G-protein regulator 1 (gpr-1) from Caenorhabditis elegans.